A 41-amino-acid chain; its full sequence is Augerpeptide-s11a (41 aa).

Post-translationally, contains 4 disulfide bonds. In terms of tissue distribution, expressed by the venom duct.

The protein resides in the secreted. Its function is as follows. Does not elicit any observable symptomatology in C.elegans. This chain is Augerpeptide-s11a, found in Terebra subulata (Chocolate spotted auger).